A 411-amino-acid polypeptide reads, in one-letter code: LL-diaminopimelate aminotransferase (411 aa).

Substrate-binding residues include Y15 and G42. Residues Y72, 108–109 (SK), Y132, N187, Y218, and 246–248 (SFS) each bind pyridoxal 5'-phosphate. K109, Y132, and N187 together coordinate substrate. K249 carries the N6-(pyridoxal phosphate)lysine modification. Positions 257 and 292 each coordinate pyridoxal 5'-phosphate. Substrate-binding residues include N292 and R388.

It belongs to the class-I pyridoxal-phosphate-dependent aminotransferase family. LL-diaminopimelate aminotransferase subfamily. In terms of assembly, homodimer. Pyridoxal 5'-phosphate serves as cofactor.

It catalyses the reaction (2S,6S)-2,6-diaminopimelate + 2-oxoglutarate = (S)-2,3,4,5-tetrahydrodipicolinate + L-glutamate + H2O + H(+). Its pathway is amino-acid biosynthesis; L-lysine biosynthesis via DAP pathway; LL-2,6-diaminopimelate from (S)-tetrahydrodipicolinate (aminotransferase route): step 1/1. Its function is as follows. Involved in the synthesis of meso-diaminopimelate (m-DAP or DL-DAP), required for both lysine and peptidoglycan biosynthesis. Catalyzes the direct conversion of tetrahydrodipicolinate to LL-diaminopimelate. This chain is LL-diaminopimelate aminotransferase, found in Geobacter sp. (strain M21).